The primary structure comprises 112 residues: DNA-binding protein Memar_1972 (112 aa).

A disordered region spans residues 14–35 (MEQMQRQAMDQQGMEEEAARQQ).

This sequence belongs to the PDCD5 family.

This chain is DNA-binding protein Memar_1972, found in Methanoculleus marisnigri (strain ATCC 35101 / DSM 1498 / JR1).